The chain runs to 314 residues: Acetaldehyde dehydrogenase (314 aa).

14–17 (SGNI) contacts NAD(+). Cysteine 132 functions as the Acyl-thioester intermediate in the catalytic mechanism. Residues 163-171 (SAGPGTRAN) and asparagine 291 contribute to the NAD(+) site.

The protein belongs to the acetaldehyde dehydrogenase family.

The catalysed reaction is acetaldehyde + NAD(+) + CoA = acetyl-CoA + NADH + H(+). This chain is Acetaldehyde dehydrogenase, found in Polaromonas sp. (strain JS666 / ATCC BAA-500).